A 471-amino-acid chain; its full sequence is L-lysine 2,3-aminomutase (471 aa).

One can recognise a Radical SAM core domain in the interval H120–A332. Residues C134, C138, and C141 each coordinate [4Fe-4S] cluster. K346 bears the N6-(pyridoxal phosphate)lysine mark.

This sequence belongs to the radical SAM superfamily. KamA family. As to quaternary structure, homotetramer. The cofactor is [4Fe-4S] cluster. It depends on pyridoxal 5'-phosphate as a cofactor.

It catalyses the reaction L-lysine = (3S)-3,6-diaminohexanoate. Its pathway is amino-acid degradation; L-lysine degradation via acetate pathway. Functionally, catalyzes the interconversion of L-alpha-lysine and L-beta-lysine. This is L-lysine 2,3-aminomutase (kamA) from Bacillus subtilis (strain 168).